A 101-amino-acid chain; its full sequence is Protein Tat (101 aa).

A compositionally biased stretch (basic and acidic residues) spans 1-10 (MEPVDPRLEP). A disordered region spans residues 1 to 20 (MEPVDPRLEPWNHPGSQPKT). An interaction with human CREBBP region spans residues 1–24 (MEPVDPRLEPWNHPGSQPKTACNN). The tract at residues 1 to 48 (MEPVDPRLEPWNHPGSQPKTACNNCYCKRCCYHCLYCFTKKGLGISYG) is transactivation. The Zn(2+) site is built by C22, C25, and C27. Positions 22-37 (CNNCYCKRCCYHCLYC) are cysteine-rich. K28 carries the N6-acetyllysine; by host PCAF modification. Residues C30, H33, C34, and C37 each contribute to the Zn(2+) site. The tract at residues 38 to 48 (FTKKGLGISYG) is core. A compositionally biased stretch (basic residues) spans 48–58 (GRKKRSQRRRT). Residues 48 to 101 (GRKKRSQRRRTPQSSKSHQDLIPEQPLSQQQGDQTGQKKQKEALESKTEADPCD) are disordered. The Nuclear localization signal, RNA-binding (TAR), and protein transduction signature appears at 49-57 (RKKRSQRRR). Residues 49 to 86 (RKKRSQRRRTPQSSKSHQDLIPEQPLSQQQGDQTGQKK) form an interaction with the host capping enzyme RNGTT region. N6-acetyllysine; by host EP300 and GCN5L2 occurs at positions 50 and 51. At R52 the chain carries Asymmetric dimethylarginine; by host PRMT6. Over residues 86–101 (KQKEALESKTEADPCD) the composition is skewed to basic and acidic residues.

It belongs to the lentiviruses Tat family. In terms of assembly, interacts with host CCNT1. Associates with the P-TEFb complex composed at least of Tat, P-TEFb (CDK9 and CCNT1), TAR RNA, RNA Pol II. Recruits the HATs CREBBP, TAF1/TFIID, EP300, PCAF and GCN5L2. Interacts with host KAT5/Tip60; this interaction targets the latter to degradation. Interacts with the host deacetylase SIRT1. Interacts with host capping enzyme RNGTT; this interaction stimulates RNGTT. Binds to host KDR, and to the host integrins ITGAV/ITGB3 and ITGA5/ITGB1. Interacts with host KPNB1/importin beta-1 without previous binding to KPNA1/importin alpha-1. Interacts with EIF2AK2. Interacts with host nucleosome assembly protein NAP1L1; this interaction may be required for the transport of Tat within the nucleus, since the two proteins interact at the nuclear rim. Interacts with host C1QBP/SF2P32; this interaction involves lysine-acetylated Tat. Interacts with the host chemokine receptors CCR2, CCR3 and CXCR4. Interacts with host DPP4/CD26; this interaction may trigger an anti-proliferative effect. Interacts with host LDLR. Interacts with the host extracellular matrix metalloproteinase MMP1. Interacts with host PRMT6; this interaction mediates Tat's methylation. Interacts with, and is ubiquitinated by MDM2/Hdm2. Interacts with host PSMC3 and HTATIP2. Interacts with STAB1; this interaction may overcome SATB1-mediated repression of IL2 and IL2RA (interleukin) in T cells by binding to the same domain than HDAC1. Interacts (when acetylated) with human CDK13, thereby increasing HIV-1 mRNA splicing and promoting the production of the doubly spliced HIV-1 protein Nef. Interacts with host TBP; this interaction modulates the activity of transcriptional pre-initiation complex. Interacts with host RELA. Interacts with host PLSCR1; this interaction negatively regulates Tat transactivation activity by altering its subcellular distribution. Post-translationally, asymmetrical arginine methylation by host PRMT6 seems to diminish the transactivation capacity of Tat and affects the interaction with host CCNT1. Acetylation by EP300, CREBBP, GCN5L2/GCN5 and PCAF regulates the transactivation activity of Tat. EP300-mediated acetylation of Lys-50 promotes dissociation of Tat from the TAR RNA through the competitive binding to PCAF's bromodomain. In addition, the non-acetylated Tat's N-terminus can also interact with PCAF. PCAF-mediated acetylation of Lys-28 enhances Tat's binding to CCNT1. Lys-50 is deacetylated by SIRT1. In terms of processing, polyubiquitination by host MDM2 does not target Tat to degradation, but activates its transactivation function and fosters interaction with CCNT1 and TAR RNA. Post-translationally, phosphorylated by EIF2AK2 on serine and threonine residues adjacent to the basic region important for TAR RNA binding and function. Phosphorylation of Tat by EIF2AK2 is dependent on the prior activation of EIF2AK2 by dsRNA.

It is found in the host nucleus. It localises to the host nucleolus. Its subcellular location is the host cytoplasm. The protein localises to the secreted. In terms of biological role, transcriptional activator that increases RNA Pol II processivity, thereby increasing the level of full-length viral transcripts. Recognizes a hairpin structure at the 5'-LTR of the nascent viral mRNAs referred to as the transactivation responsive RNA element (TAR) and recruits the cyclin T1-CDK9 complex (P-TEFb complex) that will in turn hyperphosphorylate the RNA polymerase II to allow efficient elongation. The CDK9 component of P-TEFb and other Tat-activated kinases hyperphosphorylate the C-terminus of RNA Pol II that becomes stabilized and much more processive. Other factors such as HTATSF1/Tat-SF1, SUPT5H/SPT5, and HTATIP2 are also important for Tat's function. Besides its effect on RNA Pol II processivity, Tat induces chromatin remodeling of proviral genes by recruiting the histone acetyltransferases (HATs) CREBBP, EP300 and PCAF to the chromatin. This also contributes to the increase in proviral transcription rate, especially when the provirus integrates in transcriptionally silent region of the host genome. To ensure maximal activation of the LTR, Tat mediates nuclear translocation of NF-kappa-B by interacting with host RELA. Through its interaction with host TBP, Tat may also modulate transcription initiation. Tat can reactivate a latently infected cell by penetrating in it and transactivating its LTR promoter. In the cytoplasm, Tat is thought to act as a translational activator of HIV-1 mRNAs. Extracellular circulating Tat can be endocytosed by surrounding uninfected cells via the binding to several surface receptors such as CD26, CXCR4, heparan sulfate proteoglycans (HSPG) or LDLR. Neurons are rarely infected, but they internalize Tat via their LDLR. Through its interaction with nuclear HATs, Tat is potentially able to control the acetylation-dependent cellular gene expression. Modulates the expression of many cellular genes involved in cell survival, proliferation or in coding for cytokines or cytokine receptors. Tat plays a role in T-cell and neurons apoptosis. Tat induced neurotoxicity and apoptosis probably contribute to neuroAIDS. Circulating Tat also acts as a chemokine-like and/or growth factor-like molecule that binds to specific receptors on the surface of the cells, affecting many cellular pathways. In the vascular system, Tat binds to ITGAV/ITGB3 and ITGA5/ITGB1 integrins dimers at the surface of endothelial cells and competes with bFGF for heparin-binding sites, leading to an excess of soluble bFGF. The polypeptide is Protein Tat (Homo sapiens (Human)).